The sequence spans 499 residues: Probable cytosol aminopeptidase (499 aa).

Mn(2+) contacts are provided by lysine 268 and aspartate 273. Lysine 280 is an active-site residue. Positions 291, 350, and 352 each coordinate Mn(2+). Residue arginine 354 is part of the active site.

Belongs to the peptidase M17 family. It depends on Mn(2+) as a cofactor.

It is found in the cytoplasm. It carries out the reaction Release of an N-terminal amino acid, Xaa-|-Yaa-, in which Xaa is preferably Leu, but may be other amino acids including Pro although not Arg or Lys, and Yaa may be Pro. Amino acid amides and methyl esters are also readily hydrolyzed, but rates on arylamides are exceedingly low.. It catalyses the reaction Release of an N-terminal amino acid, preferentially leucine, but not glutamic or aspartic acids.. Presumably involved in the processing and regular turnover of intracellular proteins. Catalyzes the removal of unsubstituted N-terminal amino acids from various peptides. The sequence is that of Probable cytosol aminopeptidase from Halorhodospira halophila (strain DSM 244 / SL1) (Ectothiorhodospira halophila (strain DSM 244 / SL1)).